The following is a 190-amino-acid chain: Xanthine phosphoribosyltransferase (190 aa).

Positions 20 and 27 each coordinate xanthine. Residue 129–133 (ANGRA) coordinates 5-phospho-alpha-D-ribose 1-diphosphate. Position 157 (Lys157) interacts with xanthine.

The protein belongs to the purine/pyrimidine phosphoribosyltransferase family. Xpt subfamily. Homodimer.

The protein localises to the cytoplasm. The catalysed reaction is XMP + diphosphate = xanthine + 5-phospho-alpha-D-ribose 1-diphosphate. It functions in the pathway purine metabolism; XMP biosynthesis via salvage pathway; XMP from xanthine: step 1/1. Its function is as follows. Converts the preformed base xanthine, a product of nucleic acid breakdown, to xanthosine 5'-monophosphate (XMP), so it can be reused for RNA or DNA synthesis. The sequence is that of Xanthine phosphoribosyltransferase from Clostridioides difficile (strain 630) (Peptoclostridium difficile).